The following is a 698-amino-acid chain: DNA-directed RNA polymerase subunit beta' (698 aa).

Zn(2+)-binding residues include C69, C71, C89, and C92. Mg(2+) contacts are provided by D509, D511, and D513.

This sequence belongs to the RNA polymerase beta' chain family. RpoC1 subfamily. In plastids the minimal PEP RNA polymerase catalytic core is composed of four subunits: alpha, beta, beta', and beta''. When a (nuclear-encoded) sigma factor is associated with the core the holoenzyme is formed, which can initiate transcription. The cofactor is Mg(2+). Zn(2+) is required as a cofactor.

It localises to the plastid. Its subcellular location is the chloroplast. The catalysed reaction is RNA(n) + a ribonucleoside 5'-triphosphate = RNA(n+1) + diphosphate. In terms of biological role, DNA-dependent RNA polymerase catalyzes the transcription of DNA into RNA using the four ribonucleoside triphosphates as substrates. This Cryptomeria japonica (Japanese cedar) protein is DNA-directed RNA polymerase subunit beta'.